The sequence spans 188 residues: GTP cyclohydrolase 1 (188 aa).

Cysteine 76, histidine 79, and cysteine 148 together coordinate Zn(2+).

The protein belongs to the GTP cyclohydrolase I family. As to quaternary structure, toroid-shaped homodecamer, composed of two pentamers of five dimers.

It carries out the reaction GTP + H2O = 7,8-dihydroneopterin 3'-triphosphate + formate + H(+). It functions in the pathway cofactor biosynthesis; 7,8-dihydroneopterin triphosphate biosynthesis; 7,8-dihydroneopterin triphosphate from GTP: step 1/1. In Caldanaerobacter subterraneus subsp. tengcongensis (strain DSM 15242 / JCM 11007 / NBRC 100824 / MB4) (Thermoanaerobacter tengcongensis), this protein is GTP cyclohydrolase 1.